The following is a 274-amino-acid chain: MSGMPKSSKMLQYINYRMRVTIQDGRVIVGRFLAFDKHMNVVICDAEEFRRIRQKGKEDREEKRTLGMILIRGETVVSMSVEAPPPEEAKLAATSKMPPQIPGGPGIGRAVGRGMPMGGMGMGGSGPMSGLTGPVRGVGGPAPHSMMPGGGVPPPMGRGGFPPQGFPPGGPSPQGAFNNNPNNNNGGPPQGFPPGGPIGRGGFPPQGFPPGGPMGGPNLNNGNMPPQGFPPGGPMGRGGFPPQGFPPGGPNFNNMPPQGFPPGGPMGRGGFQRK.

In terms of domain architecture, Sm spans 5 to 85; that stretch reads PKSSKMLQYI…VVSMSVEAPP (81 aa). The interval 148–274 is disordered; the sequence is PGGGVPPPMG…PMGRGGFQRK (127 aa). Repeat unit 1 spans residues 162-171; it reads PPQGFPPGGP. The 6 X 10 AA repeats of P-P-Q-G-F-P-P-G-G-P stretch occupies residues 162-265; sequence PPQGFPPGGP…PPQGFPPGGP (104 aa). The segment covering 173 to 187 has biased composition (low complexity); the sequence is PQGAFNNNPNNNNGG. 5 tandem repeats follow at residues 188-197, 204-213, 225-234, 241-250, and 256-265. A compositionally biased stretch (low complexity) spans 216–226; the sequence is GPNLNNGNMPP. The segment covering 265–274 has biased composition (gly residues); the sequence is PMGRGGFQRK.

It belongs to the snRNP SmB/SmN family.

It localises to the cytoplasm. The protein resides in the cytosol. It is found in the nucleus. Plays a role in pre-mRNA splicing as a core component of the spliceosomal U1, U2, U4 and U5 small nuclear ribonucleoproteins (snRNPs), the building blocks of the spliceosome. In Dictyostelium discoideum (Social amoeba), this protein is Small nuclear ribonucleoprotein-associated protein B (snrpb).